The primary structure comprises 90 residues: Probable Fe(2+)-trafficking protein (90 aa).

This sequence belongs to the Fe(2+)-trafficking protein family.

Its function is as follows. Could be a mediator in iron transactions between iron acquisition and iron-requiring processes, such as synthesis and/or repair of Fe-S clusters in biosynthetic enzymes. The sequence is that of Probable Fe(2+)-trafficking protein from Nitrosospira multiformis (strain ATCC 25196 / NCIMB 11849 / C 71).